Reading from the N-terminus, the 527-residue chain is Catalase (527 aa).

N-acetylalanine is present on Ala2. Position 9 is a phosphoserine (Ser9). Catalysis depends on residues His75 and Asn148. NADP(+)-binding residues include His194, Ser201, Arg203, and Asn213. The residue at position 221 (Lys221) is an N6-succinyllysine. Lys233 carries the N6-acetyllysine modification. Positions 237, 303, 305, and 306 each coordinate NADP(+). Position 306 is an N6-acetyllysine; alternate (Lys306). The residue at position 306 (Lys306) is an N6-succinyllysine; alternate. Position 358 (Tyr358) interacts with heme. Phosphoserine occurs at positions 417 and 422. The residue at position 480 (Lys480) is an N6-acetyllysine; alternate. At Lys480 the chain carries N6-succinyllysine; alternate. Lys499 carries the post-translational modification N6-acetyllysine. Thr511 is subject to Phosphothreonine. Residues Ser515 and Ser517 each carry the phosphoserine modification. The Microbody targeting signal; atypical motif lies at Lys524–Leu527.

Belongs to the catalase family. In terms of assembly, homotetramer. Interacts (via microbody targeting signal) with PEX5, monomeric form interacts with PEX5, leading to its translocation into peroxisomes. Requires heme as cofactor. NADP(+) is required as a cofactor.

It localises to the peroxisome matrix. The enzyme catalyses 2 H2O2 = O2 + 2 H2O. Its function is as follows. Catalyzes the degradation of hydrogen peroxide (H(2)O(2)) generated by peroxisomal oxidases to water and oxygen, thereby protecting cells from the toxic effects of hydrogen peroxide. Promotes growth of cells including T-cells, B-cells, myeloid leukemia cells, melanoma cells, mastocytoma cells and normal and transformed fibroblast cells. This chain is Catalase (CAT), found in Homo sapiens (Human).